A 445-amino-acid polypeptide reads, in one-letter code: Phosphoglucosamine mutase (445 aa).

The active-site Phosphoserine intermediate is the S102. Mg(2+)-binding residues include S102, D241, D243, and D245. Residue S102 is modified to Phosphoserine.

This sequence belongs to the phosphohexose mutase family. Mg(2+) is required as a cofactor. Activated by phosphorylation.

The catalysed reaction is alpha-D-glucosamine 1-phosphate = D-glucosamine 6-phosphate. Its function is as follows. Catalyzes the conversion of glucosamine-6-phosphate to glucosamine-1-phosphate. The polypeptide is Phosphoglucosamine mutase (Shewanella sp. (strain W3-18-1)).